The primary structure comprises 1000 residues: UPF0182 protein SCO5204 (1000 aa).

The next 7 helical transmembrane spans lie at Leu-26–Thr-48, Ile-70–His-92, Trp-121–Arg-143, Phe-177–Leu-199, Leu-220–Leu-237, Leu-267–Trp-289, and Pro-296–Val-318. Disordered stretches follow at residues Ala-884 to Val-908 and Glu-943 to Gly-1000. Over residues Gln-888–Thr-897 the composition is skewed to acidic residues. Basic and acidic residues-rich tracts occupy residues Glu-943–Ala-953 and Asn-963–Gly-984.

This sequence belongs to the UPF0182 family.

The protein resides in the cell membrane. This chain is UPF0182 protein SCO5204, found in Streptomyces coelicolor (strain ATCC BAA-471 / A3(2) / M145).